Consider the following 474-residue polypeptide: TOM1-like protein 1 (474 aa).

In terms of domain architecture, VHS spans 22–154 (ATFAGVLTED…DLLKKGVQFP (133 aa)). The disordered stretch occupies residues 153-180 (FPPSDGEPETRQEAGQISPNRPTSVPTA). Over residues 165–178 (EAGQISPNRPTSVP) the composition is skewed to polar residues. Ser-170 is modified (phosphoserine). The region spanning 199–287 (EQIGKLHSEL…AVLGYERFTR (89 aa)) is the GAT domain. The tract at residues 291 to 317 (RLLEQKRNRTEATRTSSEPSAPSCDLL) is disordered. Over residues 293 to 302 (LEQKRNRTEA) the composition is skewed to basic and acidic residues. Phosphoserine is present on residues Ser-313 and Ser-320. The interaction with GRB2 stretch occupies residues 392-395 (YDNF). The SH3-binding motif lies at 420 to 424 (LPPLP). Residues 441–444 (YEVM) form an interaction with PIK3R1 region. The residue at position 457 (Tyr-457) is a Phosphotyrosine. The SH2-binding motif lies at 457–460 (YEEI).

The protein belongs to the TOM1 family. As to quaternary structure, interacts with LYN. Interacts with the SH2 and SH3 domains of FYN when phosphorylated. Also interacts with GRB2 and PIK3R1 when phosphorylated. In terms of processing, phosphorylated on tyrosines by LYN. Phosphorylated on tyrosines by FYN. In terms of tissue distribution, strongly expressed in brain and kidney, expressed at intermediate levels skin and heart, and weakly expressed in thymus. Not expressed in liver and spleen.

The protein resides in the golgi apparatus. The protein localises to the golgi stack. It localises to the endosome membrane. It is found in the cytoplasm. Its subcellular location is the membrane. In terms of biological role, probable adapter protein involved in signaling pathways. Interacts with the SH2 and SH3 domains of various signaling proteins when it is phosphorylated. May promote FYN activation, possibly by disrupting intramolecular SH3-dependent interactions. This Mus musculus (Mouse) protein is TOM1-like protein 1 (Tom1l1).